The following is a 506-amino-acid chain: 2,3-bisphosphoglycerate-independent phosphoglycerate mutase (506 aa).

Mn(2+) is bound by residues aspartate 13 and serine 63. Residue serine 63 is the Phosphoserine intermediate of the active site. Substrate is bound by residues histidine 124, 153-154 (RD), arginine 183, arginine 189, 255-258 (RADR), and lysine 331. Mn(2+) contacts are provided by aspartate 397, histidine 401, aspartate 438, histidine 439, and histidine 457.

It belongs to the BPG-independent phosphoglycerate mutase family. In terms of assembly, monomer. Mn(2+) is required as a cofactor.

It catalyses the reaction (2R)-2-phosphoglycerate = (2R)-3-phosphoglycerate. It participates in carbohydrate degradation; glycolysis; pyruvate from D-glyceraldehyde 3-phosphate: step 3/5. Catalyzes the interconversion of 2-phosphoglycerate and 3-phosphoglycerate. This is 2,3-bisphosphoglycerate-independent phosphoglycerate mutase from Ruegeria sp. (strain TM1040) (Silicibacter sp.).